A 405-amino-acid chain; its full sequence is DNA polymerase IV 1 (405 aa).

Residues 23–203 (IAHIDCDAFY…RPVTTIWGVG (181 aa)) enclose the UmuC domain. Residues D27 and D120 each coordinate Mg(2+). E121 is a catalytic residue.

It belongs to the DNA polymerase type-Y family. In terms of assembly, monomer. It depends on Mg(2+) as a cofactor.

The protein localises to the cytoplasm. It catalyses the reaction DNA(n) + a 2'-deoxyribonucleoside 5'-triphosphate = DNA(n+1) + diphosphate. Functionally, poorly processive, error-prone DNA polymerase involved in untargeted mutagenesis. Copies undamaged DNA at stalled replication forks, which arise in vivo from mismatched or misaligned primer ends. These misaligned primers can be extended by PolIV. Exhibits no 3'-5' exonuclease (proofreading) activity. May be involved in translesional synthesis, in conjunction with the beta clamp from PolIII. In Agrobacterium fabrum (strain C58 / ATCC 33970) (Agrobacterium tumefaciens (strain C58)), this protein is DNA polymerase IV 1 (dinB1).